Here is a 417-residue protein sequence, read N- to C-terminus: Guanine nucleotide-exchange factor SEC12 (417 aa).

Residues 1–388 lie on the Cytoplasmic side of the membrane; the sequence is MGRRRGVELY…QLHLLPSRRS (388 aa). At Tyr10 the chain carries 3'-nitrotyrosine. A disordered region spans residues 101–135; that stretch reads KGSKAEKSGSKEQGPRQRKGAPPAEKKSGAQVHPE. The span at 103-115 shows a compositional bias: basic and acidic residues; sequence SKAEKSGSKEQGP. WD repeat units follow at residues 152–191, 194–232, and 298–337; these read SNEP…KVLE, AHEG…TQLQ, and CGHE…RLYY. The chain crosses the membrane as a helical span at residues 389-409; that stretch reads VPVWLLLLLCVGLIIVTILLL. The Lumenal portion of the chain corresponds to 410-417; the sequence is QTAFPGFL.

As to quaternary structure, interacts with SAR1B (GDP-bound form). Interacts with MIA2; recruits PREB to endoplasmic reticulum exit sites. Interacts with CIDEB; facilitating loading of SCAP-SREBP into COPII vesicles.

It localises to the endoplasmic reticulum membrane. The protein localises to the nucleus. In terms of biological role, guanine nucleotide exchange factor (GEF) that regulates the assembly of the coat protein complex II/COPII in endoplasmic reticulum (ER) to Golgi vesicle-mediated transport. Selectively activates SAR1A and SAR1B by promoting the exchange of guanosine diphosphate (GDP) for guanosine triphosphate (GTP) in these small GTPases. In their activated GTP-bound state, SAR1A and SAR1B insert into the membrane of the endoplasmic reticulum where they recruit the remainder of the coat protein complex II/COPII which is responsible for both the sorting of proteins and the deformation and budding of membranes into vesicles destined to the Golgi. Functionally, was first identified based on its probable role in the regulation of pituitary gene transcription. Binds to the prolactin gene (PRL) promoter and seems to activate transcription. The sequence is that of Guanine nucleotide-exchange factor SEC12 from Mus musculus (Mouse).